A 405-amino-acid chain; its full sequence is 4-hydroxy-3-methylbut-2-enyl diphosphate reductase (405 aa).

Position 66 (cysteine 66) interacts with [4Fe-4S] cluster. Residue histidine 96 coordinates (2E)-4-hydroxy-3-methylbut-2-enyl diphosphate. Histidine 96 provides a ligand contact to dimethylallyl diphosphate. Histidine 96 provides a ligand contact to isopentenyl diphosphate. Cysteine 157 is a [4Fe-4S] cluster binding site. Position 185 (histidine 185) interacts with (2E)-4-hydroxy-3-methylbut-2-enyl diphosphate. Dimethylallyl diphosphate is bound at residue histidine 185. Histidine 185 contacts isopentenyl diphosphate. The active-site Proton donor is the glutamate 187. Threonine 250 contributes to the (2E)-4-hydroxy-3-methylbut-2-enyl diphosphate binding site. Cysteine 288 contacts [4Fe-4S] cluster. 4 residues coordinate (2E)-4-hydroxy-3-methylbut-2-enyl diphosphate: serine 317, serine 318, asparagine 319, and serine 380. The dimethylallyl diphosphate site is built by serine 317, serine 318, asparagine 319, and serine 380. Isopentenyl diphosphate is bound by residues serine 317, serine 318, asparagine 319, and serine 380.

It belongs to the IspH family. The cofactor is [4Fe-4S] cluster.

It carries out the reaction isopentenyl diphosphate + 2 oxidized [2Fe-2S]-[ferredoxin] + H2O = (2E)-4-hydroxy-3-methylbut-2-enyl diphosphate + 2 reduced [2Fe-2S]-[ferredoxin] + 2 H(+). The enzyme catalyses dimethylallyl diphosphate + 2 oxidized [2Fe-2S]-[ferredoxin] + H2O = (2E)-4-hydroxy-3-methylbut-2-enyl diphosphate + 2 reduced [2Fe-2S]-[ferredoxin] + 2 H(+). The protein operates within isoprenoid biosynthesis; dimethylallyl diphosphate biosynthesis; dimethylallyl diphosphate from (2E)-4-hydroxy-3-methylbutenyl diphosphate: step 1/1. It participates in isoprenoid biosynthesis; isopentenyl diphosphate biosynthesis via DXP pathway; isopentenyl diphosphate from 1-deoxy-D-xylulose 5-phosphate: step 6/6. Functionally, catalyzes the conversion of 1-hydroxy-2-methyl-2-(E)-butenyl 4-diphosphate (HMBPP) into a mixture of isopentenyl diphosphate (IPP) and dimethylallyl diphosphate (DMAPP). Acts in the terminal step of the DOXP/MEP pathway for isoprenoid precursor biosynthesis. The sequence is that of 4-hydroxy-3-methylbut-2-enyl diphosphate reductase from Prochlorococcus marinus (strain SARG / CCMP1375 / SS120).